The chain runs to 1273 residues: MVSMLPKADAATGVIRKSYAQLPEVVNVPNLIEMQLQSFVWFQEEGLRELIEEISPIKDFVGNRLELEFIGYEFREPRLSEYECTQRDQTYSVPLYVKARLIVKTTGEIKEPFDLFFGDIPLMTALGTFITSGTERVVVSQLLRSPGVYFTISDDPATGRPLCHTNLIPSRGAWLEFETSNRDVISVKIDGRRKIPVSTLLRAIGYSDDLDILNLFEVIDNDPERHYIQSSIDRDPLIKDEISALIDIYSRLRPGDPPNADNARKLINEMFFDPQHYDLGKVGRYKVNRRLELPSREVGENRALTREDIVAIIQRIIMVNNGQDTPDDIDHLGNRRIRTVGELVQNQFRIGLVRLERVARERMSIVNLEMVTPSALVNIRPVVSAVKEFFGGSQLSQFMDQTNPLAEITNKRRLSAMGPGGLSRERAGFDVRDVHYSHYGRICPIETPEGPNIGLIGSLATYSRINRYGFVETPYRKVYSKLKNNDKKLVGLKLKTEISEKGKVLAAAGSTISEDSFKIISKLPECDISVMPFVSAEVKYMPADEEDRYIIAQANTRLDEKGYFLDDRIEARSAERYVVEPPDKIDYMDVSPKQIFSVAASLIPFLEHDDANRALMGANMQRQAVPLLRAEAPMVATGMEREAARYSGQVIFAKHAGVASSVTSEKIIIRTAEGGHDEYLLKKFVRTNQGTCINQHAIINKGQKIAAGQVLADSSATENGELALGQNCVVAFMSWQGFNYEDAIILSERLVREDAFTSIHITKHELEARDTKLGVEEITRDIPNVGEESLRELDEDGIIRIGAEVGPDDILVGKITPKGETELSAEEKLLRAIFGEKAREVKDTSLRMPHGEWGKVINVRIFSRDSGDDLPARVNKWVQVWVAQKRKVSVGDKLAGRHGNKGVISIIAPVEDMPYLPDGTPVDVVLNPIGVPSRMNLGQILETHLGWAGHLLGFRVATPVFDGADDTVIEDALARSWLSAKAGAIDMSPENKRPSADAHKAIEWIKQQGFDGKKIFDEKHPGLAKEVSLKLWLKDMGVDASALSGAELEKKAYDVSSQSRLPSPIVGKSVLRDGRTGETFDQPVTVGNMYILKLIHLVEDKVHARATGPYSLISQQPLGGKAQFGGQRFGEMEVWAMYAYGTAHNLQEMLTIKSDDIAGRAKAYESIVKGEDVLQPGVPESFKVLVKELQSLGLAVEVINEEVKIAPSEKVSSLNEGNLPASDEISAEILPETLYANTEDISEDSMMSVIDADDQDLVVSSNDEEVSENDERS.

The segment at 1252-1273 (ADDQDLVVSSNDEEVSENDERS) is disordered.

It belongs to the RNA polymerase beta chain family. In terms of assembly, the RNAP catalytic core consists of 2 alpha, 1 beta, 1 beta' and 1 omega subunit. When a sigma factor is associated with the core the holoenzyme is formed, which can initiate transcription.

The catalysed reaction is RNA(n) + a ribonucleoside 5'-triphosphate = RNA(n+1) + diphosphate. DNA-dependent RNA polymerase catalyzes the transcription of DNA into RNA using the four ribonucleoside triphosphates as substrates. In Dehalococcoides mccartyi (strain ATCC BAA-2100 / JCM 16839 / KCTC 5957 / BAV1), this protein is DNA-directed RNA polymerase subunit beta.